Here is a 61-residue protein sequence, read N- to C-terminus: Statherin (61 aa).

The signal sequence occupies residues 1-19 (MXFLXFXLXLLXMXXMXXX). A hydroxyapatite-binding; inhibits crystal growth region spans residues 20-25 (DSSEEK). Phosphoserine occurs at positions 21 and 22. A disordered region spans residues 37-61 (RYGPYQPFAPQPLYPQPYQPYQPQY). Positions 37–61 (RYGPYQPFAPQPLYPQPYQPYQPQY) are hydrophobic; inhibits precipitation of calcium phosphate salts. Over residues 43–61 (PFAPQPLYPQPYQPYQPQY) the composition is skewed to pro residues.

The protein belongs to the histatin/statherin family. Secreted by parotid and submandibular glands.

The protein resides in the secreted. Salivary protein that stabilizes saliva supersaturated with calcium salts by inhibiting the precipitation of calcium phosphate salts. It also modulates hydroxyapatite crystal formation on the tooth surface. This chain is Statherin (STATH), found in Macaca fascicularis (Crab-eating macaque).